The primary structure comprises 263 residues: MTTYAQDSKLRLKTKIGADGRCVIEDNFFTPPFKLMAPFYPKDDLAEIMLLAVSPGLMKGDAQDMQLNIGQNCKLRITSQSFEKIHNTEDGFAGRDMHIVVGENAFLDFAPFPLIPFENAHFKGNTTISLHSSSQLLYSEIIVAGRVARNELFQFNRLHTKISILQDNKPIYYDNTILDPKTTDMTNMCMFDGYTHYLNLVLINCPLELFGARELIEEAEVDGAVSEIASSHLCLKALAKGSEPLLALREKIARLVTQKIQKD.

It belongs to the UreD family. As to quaternary structure, ureH, UreF and UreG form a complex that acts as a GTP-hydrolysis-dependent molecular chaperone, activating the urease apoprotein by helping to assemble the nickel containing metallocenter of UreC. The UreE protein probably delivers the nickel.

The protein resides in the cytoplasm. Its function is as follows. Required for maturation of urease via the functional incorporation of the urease nickel metallocenter. This chain is Urease accessory protein UreH, found in Helicobacter acinonychis (strain Sheeba).